Here is a 67-residue protein sequence, read N- to C-terminus: Metallothionein-A (67 aa).

The protein belongs to the metallothionein superfamily. Type 4 family.

Metallothioneins have a high content of cysteine residues that bind various heavy metals. The protein is Metallothionein-A of Sphaerechinus granularis (Purple sea urchin).